The primary structure comprises 200 residues: Small ribosomal subunit protein uS4 (200 aa).

The interval 22 to 42 is disordered; it reads TGKELQKRPYPPGQHGPGQRR. The 61-residue stretch at 92–152 folds into the S4 RNA-binding domain; that stretch reads SRLDNLVYRL…EKSRNLQVIK (61 aa).

Belongs to the universal ribosomal protein uS4 family. As to quaternary structure, part of the 30S ribosomal subunit. Contacts protein S5. The interaction surface between S4 and S5 is involved in control of translational fidelity.

Its function is as follows. One of the primary rRNA binding proteins, it binds directly to 16S rRNA where it nucleates assembly of the body of the 30S subunit. Functionally, with S5 and S12 plays an important role in translational accuracy. The sequence is that of Small ribosomal subunit protein uS4 (rpsD) from Geobacillus stearothermophilus (Bacillus stearothermophilus).